A 330-amino-acid polypeptide reads, in one-letter code: Peroxidase 55 (330 aa).

Residues 1–30 (MDIRSDDAKKPMMMWFLGMLLFSMVAESNA) form the signal peptide. 4 disulfide bridges follow: cysteine 41–cysteine 121, cysteine 74–cysteine 79, cysteine 127–cysteine 326, and cysteine 206–cysteine 238. The active-site Proton acceptor is the histidine 72. Ca(2+) contacts are provided by aspartate 73, valine 76, glycine 78, aspartate 80, and serine 82. Proline 169 contacts substrate. Histidine 199 contacts heme b. Ca(2+) is bound at residue threonine 200. N-linked (GlcNAc...) asparagine glycosylation is present at asparagine 215. The Ca(2+) site is built by aspartate 250, serine 253, and aspartate 258.

The protein belongs to the peroxidase family. Classical plant (class III) peroxidase subfamily. Heme b is required as a cofactor. Requires Ca(2+) as cofactor. In terms of tissue distribution, slightly expressed in roots.

The protein resides in the secreted. The catalysed reaction is 2 a phenolic donor + H2O2 = 2 a phenolic radical donor + 2 H2O. Its function is as follows. Removal of H(2)O(2), oxidation of toxic reductants, biosynthesis and degradation of lignin, suberization, auxin catabolism, response to environmental stresses such as wounding, pathogen attack and oxidative stress. These functions might be dependent on each isozyme/isoform in each plant tissue. This is Peroxidase 55 (PER55) from Arabidopsis thaliana (Mouse-ear cress).